The following is a 535-amino-acid chain: 3-hydroxyindolin-2-one monooxygenase (535 aa).

A run of 2 helical transmembrane segments spans residues 14–34 (VVQC…LLAI) and 469–489 (ICAG…NLIY). Residue cysteine 470 coordinates heme.

This sequence belongs to the cytochrome P450 family. The cofactor is heme.

It is found in the membrane. It carries out the reaction 3-hydroxyindolin-2-one + reduced [NADPH--hemoprotein reductase] + O2 = 2-hydroxy-2H-1,4-benzoxazin-3(4H)-one + oxidized [NADPH--hemoprotein reductase] + H2O + H(+). The protein operates within secondary metabolite biosynthesis; 2,4-dihydroxy-1,4-benzoxazin-3-one biosynthesis; 2,4-dihydroxy-1,4-benzoxazin-3-one from indoleglycerol phosphate: step 4/5. Catalyzes the conversion of 3-hydroxyindolin-2-one to 2-hydroxy-1,4-benzoxazin-3-one (HBOA). This Zea mays (Maize) protein is 3-hydroxyindolin-2-one monooxygenase (CYP71C1).